A 144-amino-acid polypeptide reads, in one-letter code: MEVIVKKVGELKVGNYIYNEQDGEVYKIVSIETSKPGKHGSAKARIEAISVTSGKKIVIIKPTSDPIKVPQIKKIKGQIIATEKRKVPSPQGEVEEVVAQVMDLETYEVIEAKVPEELKDKVEPGANVIVWDLGVPVVMQVFKQ.

A Hypusine modification is found at K38.

Belongs to the eIF-5A family.

The protein resides in the cytoplasm. Its function is as follows. Functions by promoting the formation of the first peptide bond. The polypeptide is Translation initiation factor 5A (Nanoarchaeum equitans (strain Kin4-M)).